Consider the following 63-residue polypeptide: UPF0337 protein RA1131 (63 aa).

Residues 1–63 form a disordered region; sequence MGSAKDKVAG…DAVKGAVDKT (63 aa). The span at 34-49 shows a compositional bias: low complexity; that stretch reads AKGAAQEAKGGAQQAK. Positions 51–63 are enriched in basic and acidic residues; sequence KLKDAVKGAVDKT.

The protein belongs to the UPF0337 (CsbD) family.

The sequence is that of UPF0337 protein RA1131 from Rhizobium meliloti (strain 1021) (Ensifer meliloti).